The primary structure comprises 2055 residues: MASKGGKSKPDIVMASKSGKSKPDNESRAKRQKTLEAPKEPRRPKTHWDHVLEEMAWLSKDFESERKWKLAQAKKVALRASKGMLDQASREERKLKEEEQRLRKVALNISKDMKKFWMKVEKLVLYKHQLVRNEKKKKAMDKQLEFLLGQTERYSTMLAENLVEPYKQGQNTPSKPLLTIESKSDEERAEQIPPEINSSAGLESGSPELDEDYDLKSEDETEDDEDTIEEDEKHFTKRERQEELEALQNEVDLPVEELLRRYTSGRVSRETSPVKDENEDNLTSVSRVTSPVKDENQDNLASVGQDHGEDKNNLAASEETEGNPSVRRSNDSYGHLAISETHSHDLEPGMTTASVKSRKEDHTYDFNDEQEDVDFVLANGEEKDDEATLAVEEELAKADNEDHVEEIALLQKESEMPIEVLLARYKEDFGGKDISEDESESSFAVSEDSIVDSDENRQQADLDDDNVDLTECKLDPEPCSENVEGTFHEVAEDNDKDSSDKIADAAAAARSAQPTGFTYSTTKVRTKLPFLLKHSLREYQHIGLDWLVTMYEKKLNGILADEMGLGKTIMTIALLAHLACDKGIWGPHLIVVPTSVMLNWETEFLKWCPAFKILTYFGSAKERKLKRQGWMKLNSFHVCITTYRLVIQDSKMFKRKKWKYLILDEAHLIKNWKSQRWQTLLNFNSKRRILLTGTPLQNDLMELWSLMHFLMPHVFQSHQEFKDWFCNPIAGMVEGQEKINKEVIDRLHNVLRPFLLRRLKRDVEKQLPSKHEHVIFCRLSKRQRNLYEDFIASTETQATLTSGSFFGMISIIMQLRKVCNHPDLFEGRPIVSSFDMAGIDVQLSSTICSLLLESPFSKVDLEALGFLFTHLDFSMTSWEGDEIKAISTPSELIKQRVNLKDDLEAIPLSPKNRKNLQGTNIFEEIRKAVFEERIQESKDRAAAIAWWNSLRCQRKPTYSTSLRTLLTIKGPLDDLKANCSSYMYSSILADIVLSPIERFQKMIELVEAFTFAIPAARVPSPTCWCSKSDSPVFLSPSYKEKVTDLLSPLLSPIRPAIVRRQVYFPDRRLIQFDCGKLQELAMLLRKLKFGGHRALIFTQMTKMLDVLEAFINLYGYTYMRLDGSTPPEERQTLMQRFNTNPKIFLFILSTRSGGVGINLVGADTVIFYDSDWNPAMDQQAQDRCHRIGQTREVHIYRLISESTIEENILKKANQKRVLDNLVIQNGEYNTEFFKKLDPMELFSGHKALTTKDEKETSKHCGADIPLSNADVEAALKQAEDEADYMALKRVEQEEAVDNQEFTEEPVERPEDDELVNEDDIKADEPADQGLVAAGPAKEEMSLLHSDIRDERAVITTSSQEDDTDVLDDVKQMAAAAADAGQAISSFENQLRPIDRYAIRFLELWDPIIVEAAMENEAGFEEKEWELDHIEKYKEEMEAEIDDGEEPLVYEKWDADFATEAYRQQVEVLAQHQLMEDLENEAREREAAEVAEMVLTQNESAHVLKPKKKKKAKKAKYKSLKKGSLAAESKHVKSVVKIEDSTDDDNEEFGYVSSSDSDMVTPLSRMHMKGKKRDLIVDTDEEKTSKKKAKKHKKSLPNSDIKYKQTSALLDELEPSKPSDSMVVDNELKLTNRGKTVGKKFITSMPIKRVLMIKPEKLKKGNLWSRDCVPSPDSWLPQEDAILCAMVHEYGPNWNFVSGTLYGMTAGGAYRGRYRHPAYCCERYRELIQRHILSASDSAVNEKNLNTGSGKALLKVTEENIRTLLNVAAEQPDTEMLLQKHFSCLLSSIWRTSTRTGNDQMLSLNSPIFNRQFMGSVNHTQDLARKPWQGMKVTSLSRKLLESALQDSGPSQPDNTISRSRLQETQPINKLGLELTLEFPRGNDDSLNQFPPMISLSIDGSDSLNYVNEPPGEDVLKGSRVAAENRYRNAANACIEDSFGWASNTFPANDLKSRTGTKAQSLGKHKLSASDSAKSTKSKHRKLLAEQLEGAWVRPNDPNLKFDFTPGDREEEEEQEVDEKANSAEIEMISCSQWYDPFFTSGLDDCSLASDISEIE.

The segment at 1–47 (MASKGGKSKPDIVMASKSGKSKPDNESRAKRQKTLEAPKEPRRPKTH) is disordered. A compositionally biased stretch (basic and acidic residues) spans 21–47 (SKPDNESRAKRQKTLEAPKEPRRPKTH). A Nuclear localization signal 1 motif is present at residues 29 to 36 (AKRQKTLE). One can recognise an HSA domain in the interval 35–107 (LEAPKEPRRP…EEQRLRKVAL (73 aa)). 2 coiled-coil regions span residues 78 to 147 (LRAS…LEFL) and 229 to 250 (EEDE…LQNE). 2 disordered regions span residues 183 to 332 (KSDE…SNDS) and 340 to 359 (ETHS…KSRK). Residues 208–230 (ELDEDYDLKSEDETEDDEDTIEE) show a composition bias toward acidic residues. Basic and acidic residues-rich tracts occupy residues 231-243 (DEKH…RQEE) and 267-276 (VSRETSPVKD). Positions 392–416 (EEELAKADNEDHVEEIALLQKESEM) form a coiled coil. The interval 432–461 (KDISEDESESSFAVSEDSIVDSDENRQQAD) is disordered. One can recognise a Helicase ATP-binding domain in the interval 548–713 (VTMYEKKLNG…WSLMHFLMPH (166 aa)). Position 561–568 (561–568 (DEMGLGKT)) interacts with ATP. Positions 664–667 (DEAH) match the DEAH box motif. A Helicase C-terminal domain is found at 1076 to 1229 (KLQELAMLLR…NLVIQNGEYN (154 aa)). The interval 1293 to 1313 (EEAVDNQEFTEEPVERPEDDE) is disordered. Positions 1419–1492 (FEEKEWELDH…EREAAEVAEM (74 aa)) form a coiled coil. 2 short sequence motifs (nuclear localization signal) span residues 1506 to 1513 (KKKKKAKK) and 1570 to 1577 (KKRDLIVD). A disordered region spans residues 1577–1597 (DTDEEKTSKKKAKKHKKSLPN). Residues 1584–1594 (SKKKAKKHKKS) are compositionally biased toward basic residues. Residues 1673-1727 (SWLPQEDAILCAMVHEYGPNWNFVSGTLYGMTAGGAYRGRYRHPAYCCERYRELI) form the Myb-like domain. Disordered regions lie at residues 1843 to 1864 (ALQD…LQET) and 1951 to 1977 (KSRT…STKS). The segment covering 1844 to 1864 (LQDSGPSQPDNTISRSRLQET) has biased composition (polar residues). A coiled-coil region spans residues 2006 to 2029 (GDREEEEEQEVDEKANSAEIEMIS).

This sequence belongs to the SNF2/RAD54 helicase family. SWR1 subfamily. As to quaternary structure, component of the SWR1 chromatin-remodeling complex composed of at least ARP6/ESD1/SUF3, PIE1, SWC6, SWC2 and H2AZs (HTA8, HTA9, HTA11). Interacts (via c-terminus) with SWC6 and ARP6 and (via N-terminus) with H2AZs. Expressed in ovules, but not in stamens.

The protein localises to the nucleus. It carries out the reaction ATP + H2O = ADP + phosphate + H(+). Its function is as follows. Component of the SWR1 complex which mediates the ATP-dependent exchange of histone H2A for the H2A variant H2A.F/Z leading to transcriptional regulation of selected genes (e.g. FLC) by chromatin remodeling. Probable DNA-dependent ATPase. Not involved in the repression of FLC in gametophytes, but required for the reactivation of FLC in early embryos and for the maintenance of full activation of FLC in late embryos. The protein is Protein PHOTOPERIOD-INDEPENDENT EARLY FLOWERING 1 (PIE1) of Arabidopsis thaliana (Mouse-ear cress).